Here is a 590-residue protein sequence, read N- to C-terminus: UvrABC system protein C (590 aa).

A GIY-YIG domain is found at 14–91 (EQPGCYLMKD…IKKHDPKYNV (78 aa)). One can recognise a UVR domain in the interval 196–231 (EDVKRELAEKMHEAAETLEFERAKEYRDQIAAIEMT).

Belongs to the UvrC family. In terms of assembly, interacts with UvrB in an incision complex.

It localises to the cytoplasm. The UvrABC repair system catalyzes the recognition and processing of DNA lesions. UvrC both incises the 5' and 3' sides of the lesion. The N-terminal half is responsible for the 3' incision and the C-terminal half is responsible for the 5' incision. The chain is UvrABC system protein C from Geobacillus kaustophilus (strain HTA426).